A 383-amino-acid polypeptide reads, in one-letter code: MKTELTLLDRTLTLHRFPNRSNETLQAWDAGDEYIISHVEEMNLEPGKHILIMNDSFGALSAWFSKDHDVTMMSDSFISHRGALKNLQRNQSNRVNFLNTMDDIPHGIDLVIMQLPKTNRHLVWQLSQLRQALPEGCQVIGVNKVKDIHTSTLNIFEKYLGETKTSLAKKKHRLVFSSPNCQPIQTVEPFVEWDVDGEDIRLKNLPNVYSGEALDQGARYMLEHIPQDPELRHIIDLGCGNGVLSVKAGQLNPQARITCVDESFMAVESARQNIKDNLGEEGNFQFIANNCLDGFKKNSTYLVMCNPPFHQQQAITDHIAWQMFCDAKHVLSNGGKLIVIGNRHLGYDVKLARLFGEANVETLELNQKFEILQATREPANFNK.

Belongs to the methyltransferase superfamily. RlmG family.

The protein localises to the cytoplasm. The enzyme catalyses guanosine(1835) in 23S rRNA + S-adenosyl-L-methionine = N(2)-methylguanosine(1835) in 23S rRNA + S-adenosyl-L-homocysteine + H(+). Functionally, specifically methylates the guanine in position 1835 (m2G1835) of 23S rRNA. This is Ribosomal RNA large subunit methyltransferase G from Vibrio atlanticus (strain LGP32) (Vibrio splendidus (strain Mel32)).